The chain runs to 730 residues: Ribosomal RNA large subunit methyltransferase K/L (730 aa).

One can recognise a THUMP domain in the interval 46–157 (TAYRLCVWSR…RGEAILSLDL (112 aa)). Residues 394–418 (GERREAQPEGTEARQQVPQASEPAR) are disordered.

The protein belongs to the methyltransferase superfamily. RlmKL family.

The protein localises to the cytoplasm. It carries out the reaction guanosine(2445) in 23S rRNA + S-adenosyl-L-methionine = N(2)-methylguanosine(2445) in 23S rRNA + S-adenosyl-L-homocysteine + H(+). It catalyses the reaction guanosine(2069) in 23S rRNA + S-adenosyl-L-methionine = N(2)-methylguanosine(2069) in 23S rRNA + S-adenosyl-L-homocysteine + H(+). Specifically methylates the guanine in position 2445 (m2G2445) and the guanine in position 2069 (m7G2069) of 23S rRNA. The protein is Ribosomal RNA large subunit methyltransferase K/L of Pseudomonas putida (strain ATCC 700007 / DSM 6899 / JCM 31910 / BCRC 17059 / LMG 24140 / F1).